The sequence spans 137 residues: Large ribosomal subunit protein uL16 (137 aa).

The protein belongs to the universal ribosomal protein uL16 family. Part of the 50S ribosomal subunit.

Functionally, binds 23S rRNA and is also seen to make contacts with the A and possibly P site tRNAs. The sequence is that of Large ribosomal subunit protein uL16 from Roseobacter denitrificans (strain ATCC 33942 / OCh 114) (Erythrobacter sp. (strain OCh 114)).